The chain runs to 161 residues: Cap-associated protein CAF20 (161 aa).

The span at 52 to 72 shows a compositional bias: basic residues; sequence HFGRRRSSHHHGRPKIKHNKP. The disordered stretch occupies residues 52–108; the sequence is HFGRRRSSHHHGRPKIKHNKPKVTTDSDGWCTFEAKKKGSGEDDEEETETTPTSTVP. Phosphoserine is present on residues S78 and S91. 3 positions are modified to phosphothreonine: T99, T101, and T102. S154 is modified (phosphoserine).

This sequence belongs to the CAF20 family. In terms of assembly, interacts with TIF45. Post-translationally, phosphorylated by casein kinase II complex (CK2).

The protein resides in the cytoplasm. Its function is as follows. Acts as an inhibitor of cap-dependent translation. Competes with eIF4G1/TIF4631 and EAP1 for binding to eIF4E/TIF45 and interferes with the formation of the eIF4F complex, inhibiting translation and stabilizing mRNA. Binding affinity for eIF4E/TIF45 is 10-fold less than that of eIF4G1/TIF4631. Required for induction of pseudohyphal growth in response to nitrogen limitation, probably by regulating STE12 translation. The chain is Cap-associated protein CAF20 (CAF20) from Saccharomyces cerevisiae (strain YJM789) (Baker's yeast).